The primary structure comprises 198 residues: Nucleoid occlusion factor SlmA (198 aa).

The HTH tetR-type domain occupies 10-70 (NRREEILQSL…SLIEFIEDSL (61 aa)). The segment at residues 33–52 (TTAKLAASVGVSEAALYRHF) is a DNA-binding region (H-T-H motif). Positions 117–144 (EQDRLQGRINQLFERIEAQLRQVLREKR) form a coiled coil.

This sequence belongs to the nucleoid occlusion factor SlmA family. Homodimer. Interacts with FtsZ.

Its subcellular location is the cytoplasm. It localises to the nucleoid. In terms of biological role, required for nucleoid occlusion (NO) phenomenon, which prevents Z-ring formation and cell division over the nucleoid. Acts as a DNA-associated cell division inhibitor that binds simultaneously chromosomal DNA and FtsZ, and disrupts the assembly of FtsZ polymers. SlmA-DNA-binding sequences (SBS) are dispersed on non-Ter regions of the chromosome, preventing FtsZ polymerization at these regions. The sequence is that of Nucleoid occlusion factor SlmA from Salmonella dublin (strain CT_02021853).